Consider the following 188-residue polypeptide: Ribosome-recycling factor (188 aa).

It belongs to the RRF family.

It localises to the cytoplasm. Functionally, responsible for the release of ribosomes from messenger RNA at the termination of protein biosynthesis. May increase the efficiency of translation by recycling ribosomes from one round of translation to another. This is Ribosome-recycling factor from Gluconacetobacter diazotrophicus (strain ATCC 49037 / DSM 5601 / CCUG 37298 / CIP 103539 / LMG 7603 / PAl5).